Reading from the N-terminus, the 415-residue chain is Levansucrase (415 aa).

Sucrose-binding residues include tryptophan 45, aspartate 46, alanine 132, arginine 202, and aspartate 203. Aspartate 46 serves as the catalytic Nucleophile. Catalysis depends on glutamate 287, which acts as the Proton donor/acceptor.

Belongs to the glycosyl hydrolase 68 family.

It catalyses the reaction [6)-beta-D-fructofuranosyl-(2-&gt;](n) alpha-D-glucopyranoside + sucrose = [6)-beta-D-fructofuranosyl-(2-&gt;](n+1) alpha-D-glucopyranoside + D-glucose. In terms of biological role, catalyzes the synthesis of levan, a fructose polymer, by transferring the fructosyl moiety from sucrose to a growing acceptor molecule. In Rahnella aquatilis (strain ATCC 33071 / DSM 4594 / JCM 1683 / NBRC 105701 / NCIMB 13365 / CIP 78.65), this protein is Levansucrase.